The chain runs to 237 residues: Purine nucleoside phosphorylase DeoD-type (237 aa).

Residue H4 participates in a purine D-ribonucleoside binding. Residues G20, R24, R43, and 87–90 (RVGT) each bind phosphate. Residues 179 to 181 (EME) and 203 to 204 (SD) contribute to the a purine D-ribonucleoside site. D204 serves as the catalytic Proton donor.

This sequence belongs to the PNP/UDP phosphorylase family. In terms of assembly, homohexamer; trimer of homodimers.

The catalysed reaction is a purine D-ribonucleoside + phosphate = a purine nucleobase + alpha-D-ribose 1-phosphate. It carries out the reaction a purine 2'-deoxy-D-ribonucleoside + phosphate = a purine nucleobase + 2-deoxy-alpha-D-ribose 1-phosphate. Functionally, catalyzes the reversible phosphorolytic breakdown of the N-glycosidic bond in the beta-(deoxy)ribonucleoside molecules, with the formation of the corresponding free purine bases and pentose-1-phosphate. The sequence is that of Purine nucleoside phosphorylase DeoD-type from Streptococcus pyogenes serotype M4 (strain MGAS10750).